The following is a 276-amino-acid chain: NH(3)-dependent NAD(+) synthetase (276 aa).

Position 43–50 (43–50 (GISGGVDS)) interacts with ATP. Residue D49 participates in Mg(2+) binding. R146 contributes to the deamido-NAD(+) binding site. An ATP-binding site is contributed by T166. Residue E171 participates in Mg(2+) binding. Deamido-NAD(+)-binding residues include K179 and D186. Positions 195 and 217 each coordinate ATP. Residue 266–267 (HK) participates in deamido-NAD(+) binding.

It belongs to the NAD synthetase family. In terms of assembly, homodimer.

It carries out the reaction deamido-NAD(+) + NH4(+) + ATP = AMP + diphosphate + NAD(+) + H(+). The protein operates within cofactor biosynthesis; NAD(+) biosynthesis; NAD(+) from deamido-NAD(+) (ammonia route): step 1/1. Its function is as follows. Catalyzes the ATP-dependent amidation of deamido-NAD to form NAD. Uses ammonia as a nitrogen source. The protein is NH(3)-dependent NAD(+) synthetase of Aliivibrio fischeri (strain MJ11) (Vibrio fischeri).